A 391-amino-acid chain; its full sequence is Mannonate dehydratase (391 aa).

The interval 334 to 359 (ERRRERDGGPRLPLRPDHGHHLLDDL) is disordered.

Belongs to the mannonate dehydratase family. The cofactor is Fe(2+). Mn(2+) serves as cofactor.

The catalysed reaction is D-mannonate = 2-dehydro-3-deoxy-D-gluconate + H2O. It functions in the pathway carbohydrate metabolism; pentose and glucuronate interconversion. Its function is as follows. Catalyzes the dehydration of D-mannonate. The sequence is that of Mannonate dehydratase from Chromohalobacter salexigens (strain ATCC BAA-138 / DSM 3043 / CIP 106854 / NCIMB 13768 / 1H11).